The chain runs to 457 residues: D-hydantoinase (457 aa).

The Zn(2+) site is built by H57 and H59. Phosphoserine is present on S69. K148 provides a ligand contact to Zn(2+). Residue K148 is modified to N6-carboxylysine. Residue Y153 coordinates substrate. Residues H181 and H237 each contribute to the Zn(2+) site. A substrate-binding site is contributed by T286. D313 is a Zn(2+) binding site. N335 is a binding site for substrate.

Belongs to the metallo-dependent hydrolases superfamily. Hydantoinase/dihydropyrimidinase family. In terms of assembly, homotetramer. It depends on Zn(2+) as a cofactor. Carboxylation allows a single lysine to coordinate two zinc ions.

Functionally, catalyzes the stereospecific hydrolysis of the cyclic amide bond of D-hydantoin derivatives. The protein is D-hydantoinase (hyuA) of Rhizobium radiobacter (Agrobacterium tumefaciens).